Reading from the N-terminus, the 95-residue chain is Aspartyl/glutamyl-tRNA(Asn/Gln) amidotransferase subunit C (95 aa).

It belongs to the GatC family. In terms of assembly, heterotrimer of A, B and C subunits.

It carries out the reaction L-glutamyl-tRNA(Gln) + L-glutamine + ATP + H2O = L-glutaminyl-tRNA(Gln) + L-glutamate + ADP + phosphate + H(+). It catalyses the reaction L-aspartyl-tRNA(Asn) + L-glutamine + ATP + H2O = L-asparaginyl-tRNA(Asn) + L-glutamate + ADP + phosphate + 2 H(+). In terms of biological role, allows the formation of correctly charged Asn-tRNA(Asn) or Gln-tRNA(Gln) through the transamidation of misacylated Asp-tRNA(Asn) or Glu-tRNA(Gln) in organisms which lack either or both of asparaginyl-tRNA or glutaminyl-tRNA synthetases. The reaction takes place in the presence of glutamine and ATP through an activated phospho-Asp-tRNA(Asn) or phospho-Glu-tRNA(Gln). The protein is Aspartyl/glutamyl-tRNA(Asn/Gln) amidotransferase subunit C of Pelagibacter ubique (strain HTCC1062).